The sequence spans 918 residues: DNA repair and recombination protein RAD54B (918 aa).

Residues methionine 1–leucine 11 are compositionally biased toward polar residues. Residues methionine 1–leucine 29 are disordered. Residues glycine 320–glycine 487 enclose the Helicase ATP-binding domain. Aspartate 333–threonine 340 contributes to the ATP binding site. Residues aspartate 438–histidine 441 carry the DEGH box motif. The region spanning valine 653–arginine 817 is the Helicase C-terminal domain. Residues lysine 842 to leucine 873 are disordered.

The protein belongs to the SNF2/RAD54 helicase family.

The protein localises to the nucleus. In terms of biological role, involved in DNA repair and mitotic recombination. This chain is DNA repair and recombination protein RAD54B (RAD54B), found in Gallus gallus (Chicken).